Reading from the N-terminus, the 228-residue chain is Cytochrome b5 domain-containing protein 1 (228 aa).

One can recognise a Cytochrome b5 heme-binding domain in the interval 17–83 (RRYFTPAEVA…DPKTRDIRKH (67 aa)). 2 residues coordinate heme: tyrosine 52 and histidine 83.

Belongs to the cytochrome b5 family.

It localises to the cytoplasm. The protein resides in the cytoskeleton. The protein localises to the cilium axoneme. Functionally, radial spoke stalk protein that binds heme under oxidizing conditions. Required for the coordinated beating of multiple cilia maybe by functioning in a redox signaling pathway. This chain is Cytochrome b5 domain-containing protein 1, found in Homo sapiens (Human).